The chain runs to 335 residues: Dihydroorotate dehydrogenase (quinone) (335 aa).

Residues 59–63 (AGLDK) and Thr83 contribute to the FMN site. Residue Lys63 participates in substrate binding. Substrate is bound at residue 108 to 112 (NRMGF). The FMN site is built by Asn136 and Asn169. Residue Asn169 coordinates substrate. Ser172 acts as the Nucleophile in catalysis. Residue Asn174 participates in substrate binding. 2 residues coordinate FMN: Lys214 and Thr242. 243-244 (NT) is a binding site for substrate. FMN-binding positions include Gly265, Gly294, and 315–316 (YS).

This sequence belongs to the dihydroorotate dehydrogenase family. Type 2 subfamily. As to quaternary structure, monomer. FMN is required as a cofactor.

The protein localises to the cell membrane. The catalysed reaction is (S)-dihydroorotate + a quinone = orotate + a quinol. Its pathway is pyrimidine metabolism; UMP biosynthesis via de novo pathway; orotate from (S)-dihydroorotate (quinone route): step 1/1. Functionally, catalyzes the conversion of dihydroorotate to orotate with quinone as electron acceptor. This chain is Dihydroorotate dehydrogenase (quinone), found in Neisseria meningitidis serogroup C / serotype 2a (strain ATCC 700532 / DSM 15464 / FAM18).